Here is a 158-residue protein sequence, read N- to C-terminus: Small ribosomal subunit protein uS7 (158 aa).

Belongs to the universal ribosomal protein uS7 family. In terms of assembly, part of the 30S ribosomal subunit. Contacts proteins S9 and S11.

In terms of biological role, one of the primary rRNA binding proteins, it binds directly to 16S rRNA where it nucleates assembly of the head domain of the 30S subunit. Is located at the subunit interface close to the decoding center, probably blocks exit of the E-site tRNA. The protein is Small ribosomal subunit protein uS7 of Phocaeicola vulgatus (strain ATCC 8482 / DSM 1447 / JCM 5826 / CCUG 4940 / NBRC 14291 / NCTC 11154) (Bacteroides vulgatus).